The primary structure comprises 124 residues: Riboflavin kinase (124 aa).

CDP is bound at residue 10–15 (GLGKAA). Threonine 39 and asparagine 41 together coordinate Mg(2+). FMN is bound by residues threonine 93 and glutamate 101. 106–109 (DKLR) lines the CDP pocket.

It belongs to the archaeal riboflavin kinase family. The cofactor is Mg(2+).

The catalysed reaction is riboflavin + CTP = CDP + FMN + H(+). It functions in the pathway cofactor biosynthesis; FMN biosynthesis; FMN from riboflavin (CTP route): step 1/1. Catalyzes the CTP-dependent phosphorylation of riboflavin (vitamin B2) to form flavin mononucleotide (FMN). The protein is Riboflavin kinase of Methanobrevibacter smithii (strain ATCC 35061 / DSM 861 / OCM 144 / PS).